Consider the following 512-residue polypeptide: Kynurenine 3-monooxygenase (512 aa).

It belongs to the aromatic-ring hydroxylase family. KMO subfamily. FAD is required as a cofactor.

The protein resides in the mitochondrion outer membrane. The catalysed reaction is L-kynurenine + NADPH + O2 + H(+) = 3-hydroxy-L-kynurenine + NADP(+) + H2O. It functions in the pathway cofactor biosynthesis; NAD(+) biosynthesis; quinolinate from L-kynurenine: step 1/3. Catalyzes the hydroxylation of L-kynurenine (L-Kyn) to form 3-hydroxy-L-kynurenine (L-3OHKyn). Required for synthesis of quinolinic acid. The protein is Kynurenine 3-monooxygenase (bna4) of Aspergillus fumigatus (strain ATCC MYA-4609 / CBS 101355 / FGSC A1100 / Af293) (Neosartorya fumigata).